A 559-amino-acid polypeptide reads, in one-letter code: Estrogen receptor beta (559 aa).

The modulating stretch occupies residues 1-155 (MAVACSPEKD…SSGGKADLHF (155 aa)). The tract at residues 128 to 148 (TSSKSARRRSQENEEGEVSSG) is disordered. 2 consecutive NR C4-type zinc fingers follow at residues 156 to 176 (CAVCHDYASGYHYGVWSCEGC) and 192 to 216 (CPATNQCTIDKNRRKSCQACRLHKC). Positions 156–221 (CAVCHDYASG…RLHKCYNVGM (66 aa)) form a DNA-binding region, nuclear receptor. Residues 243–254 (RLSSQGRTSGPS) are compositionally biased toward polar residues. Positions 243–269 (RLSSQGRTSGPSVLNGPAVGPLNTPQP) are disordered. An NR LBD domain is found at 273-509 (TSKQLIERIM…DLLLEMLDAH (237 aa)). Residues 514 to 559 (SRLPRRSPQQETVEQCDAPARPHSPGTSGPTNTWTPSCTGGRGEPQ) form a disordered region. Residues 538–551 (PGTSGPTNTWTPSC) show a composition bias toward polar residues.

Belongs to the nuclear hormone receptor family. NR3 subfamily. As to quaternary structure, binds DNA as a homodimer. Can form a heterodimer with ER-alpha.

The protein resides in the nucleus. Its function is as follows. Binds estrogens with an affinity similar to that of ER-alpha, and activates expression of reporter genes containing estrogen response elements (ERE) in an estrogen-dependent manner. In Sparus aurata (Gilthead sea bream), this protein is Estrogen receptor beta (esr2).